A 472-amino-acid chain; its full sequence is Uronate isomerase (472 aa).

This sequence belongs to the metallo-dependent hydrolases superfamily. Uronate isomerase family.

It carries out the reaction D-glucuronate = D-fructuronate. The catalysed reaction is aldehydo-D-galacturonate = keto-D-tagaturonate. It participates in carbohydrate metabolism; pentose and glucuronate interconversion. This Lactococcus lactis subsp. cremoris (strain MG1363) protein is Uronate isomerase.